A 269-amino-acid polypeptide reads, in one-letter code: MKPLNILISNDDGVFAAGIRALAKSAQKRGHKVKVVCPDQERSATGHGLTLQSPLRVEKADELFGDGIEAWGCSGTPADCVKLALSELLDNKPDLILSGINHGPNLGTDIFCSGTVAAAMEGTLENVPSMAISVASFKWKNFEYAGEIAINIAEQAINDNWPASLLLNLNIPPCAKSKIKELSWTRLSVRKYKNQFSKREDPRGDDYYWLAGEVVLDLKSKGYGPKNWPSDVSQIQNNKISLTPVEPDLFWRGNLDDLPKINNSFVNPS.

Asp-11, Asp-12, Ser-43, and Asn-101 together coordinate a divalent metal cation.

Belongs to the SurE nucleotidase family. Requires a divalent metal cation as cofactor.

Its subcellular location is the cytoplasm. The enzyme catalyses a ribonucleoside 5'-phosphate + H2O = a ribonucleoside + phosphate. In terms of biological role, nucleotidase that shows phosphatase activity on nucleoside 5'-monophosphates. The protein is 5'-nucleotidase SurE of Prochlorococcus marinus (strain MIT 9301).